The chain runs to 152 residues: Transcriptional regulator MraZ (152 aa).

2 SpoVT-AbrB domains span residues 5–52 and 81–124; these read ANAV…PLPE and AVDL…NEDA.

The protein belongs to the MraZ family. Forms oligomers.

The protein localises to the cytoplasm. Its subcellular location is the nucleoid. This Azotobacter vinelandii (strain DJ / ATCC BAA-1303) protein is Transcriptional regulator MraZ.